Consider the following 49-residue polypeptide: Large ribosomal subunit protein bL33A (49 aa).

It belongs to the bacterial ribosomal protein bL33 family.

This Bacillus pumilus (strain SAFR-032) protein is Large ribosomal subunit protein bL33A.